Reading from the N-terminus, the 828-residue chain is Outer membrane usher protein MrkC (828 aa).

The first 18 residues, 1–18 (MKQRSICPGRLSTAIAVA), serve as a signal peptide directing secretion. Cysteine 813 and cysteine 827 are disulfide-bonded.

It belongs to the fimbrial export usher family.

Its subcellular location is the cell outer membrane. Its function is as follows. Involved in the export and assembly of the type 3 fimbrial subunit (MrkA). The polypeptide is Outer membrane usher protein MrkC (mrkC) (Klebsiella pneumoniae).